The chain runs to 317 residues: Serpentine receptor class delta-44 (317 aa).

6 helical membrane-spanning segments follow: residues 5–25 (ILSV…IILI), 90–110 (MFHI…LTTF), 130–150 (ILFI…LVII), 185–205 (RVNG…CLLL), 235–255 (IFGH…SLIT), and 264–284 (FFIF…TMYF).

It belongs to the nematode receptor-like protein srd family.

The protein localises to the membrane. This is Serpentine receptor class delta-44 (srd-44) from Caenorhabditis elegans.